The primary structure comprises 144 residues: MPKNKGKGGKNRKRGKNEADDDKRELVFKEDGQEYAQVTRMLGNGRCEAICVDGTKRLCHIRGKMHKKVWIAAGDIVLVGLRDYQDDKADVILKYMNDEARLLKAYGELPDTVRLNEGVDVDGPEEGEGDSDYIQFEDEDIDKI.

Basic residues predominate over residues 1–15 (MPKNKGKGGKNRKRG). Disordered regions lie at residues 1–25 (MPKNKGKGGKNRKRGKNEADDDKRE) and 120–144 (DVDGPEEGEGDSDYIQFEDEDIDKI). Residues 16–25 (KNEADDDKRE) show a composition bias toward basic and acidic residues. Positions 22–96 (DKRELVFKED…DKADVILKYM (75 aa)) constitute an S1-like domain.

It belongs to the eIF-1A family.

Seems to be required for maximal rate of protein biosynthesis. Enhances ribosome dissociation into subunits and stabilizes the binding of the initiator Met-tRNA(I) to 40 S ribosomal subunits. The sequence is that of Eukaryotic translation initiation factor 1A from Triticum aestivum (Wheat).